Here is a 1327-residue protein sequence, read N- to C-terminus: Myb-like protein O (1327 aa).

The segment covering Asn131 to Lys142 has biased composition (low complexity). 4 disordered regions span residues Asn131 to Asn153, Glu263 to Ser390, Pro504 to Ser668, and Lys717 to Asp770. The segment covering Glu263–Asn283 has biased composition (acidic residues). The segment covering Tyr322–Asn353 has biased composition (low complexity). The segment covering Asp356–Asp374 has biased composition (acidic residues). The segment covering Ser511–Lys532 has biased composition (low complexity). Residues Asn533–Glu542 show a composition bias toward basic residues. Basic and acidic residues predominate over residues Lys543–Arg554. Residues Lys555–Thr577 show a composition bias toward basic residues. Over residues Ser585–Glu606 the composition is skewed to acidic residues. Residues Gly607–Val619 are compositionally biased toward gly residues. Positions Ser624–Ser633 are enriched in acidic residues. 2 stretches are compositionally biased toward low complexity: residues His646–Ser668 and Gln722–Ile732. Residues Asn754–Asp770 are compositionally biased toward acidic residues. One can recognise an HTH myb-type domain in the interval Asn897–Ser953. The H-T-H motif DNA-binding region spans Trp925–Leu949. The region spanning Lys959–Glu1010 is the Myb-like 1 domain. 2 stretches are compositionally biased toward low complexity: residues Asn1061–Asn1118 and Pro1144–Pro1160. Disordered stretches follow at residues Asn1061–Gly1122 and Pro1144–Ile1168. The Myb-like 2 domain occupies Lys1268–Leu1316.

Its subcellular location is the nucleus. This chain is Myb-like protein O (mybO), found in Dictyostelium discoideum (Social amoeba).